A 292-amino-acid polypeptide reads, in one-letter code: Aquaporin PIP1-3/PIP1-4 (292 aa).

Residues Met-1–Pro-42 form a disordered region. 2 helical membrane passes run Ile-61–Val-81 and Ile-96–His-118. An NPA 1 motif is present at residues Asn-120–Ala-122. 3 consecutive transmembrane segments (helical) span residues Ile-139–Phe-159, Gly-181–Ala-201, and Ile-215–Ile-235. Positions Asn-241 to Ala-243 match the NPA 2 motif. Residues Ile-263 to Ile-283 traverse the membrane as a helical segment.

Belongs to the MIP/aquaporin (TC 1.A.8) family. PIP (TC 1.A.8.11) subfamily.

It is found in the cell membrane. Functionally, aquaporins facilitate the transport of water and small neutral solutes across cell membranes. The polypeptide is Aquaporin PIP1-3/PIP1-4 (PIP1-3) (Zea mays (Maize)).